The following is a 299-amino-acid chain: 4-diphosphocytidyl-2-C-methyl-D-erythritol kinase (299 aa).

Lys-33 is an active-site residue. Residue 115–125 (PLASGLGGGSS) participates in ATP binding. The active site involves Asp-154.

The protein belongs to the GHMP kinase family. IspE subfamily.

It catalyses the reaction 4-CDP-2-C-methyl-D-erythritol + ATP = 4-CDP-2-C-methyl-D-erythritol 2-phosphate + ADP + H(+). It participates in isoprenoid biosynthesis; isopentenyl diphosphate biosynthesis via DXP pathway; isopentenyl diphosphate from 1-deoxy-D-xylulose 5-phosphate: step 3/6. Functionally, catalyzes the phosphorylation of the position 2 hydroxy group of 4-diphosphocytidyl-2C-methyl-D-erythritol. The sequence is that of 4-diphosphocytidyl-2-C-methyl-D-erythritol kinase from Deinococcus geothermalis (strain DSM 11300 / CIP 105573 / AG-3a).